Here is a 430-residue protein sequence, read N- to C-terminus: Tol-Pal system protein TolB (430 aa).

An N-terminal signal peptide occupies residues 1–21; that stretch reads MKQALRVAFGFLILWASVLHA.

This sequence belongs to the TolB family. As to quaternary structure, the Tol-Pal system is composed of five core proteins: the inner membrane proteins TolA, TolQ and TolR, the periplasmic protein TolB and the outer membrane protein Pal. They form a network linking the inner and outer membranes and the peptidoglycan layer.

It localises to the periplasm. Its function is as follows. Part of the Tol-Pal system, which plays a role in outer membrane invagination during cell division and is important for maintaining outer membrane integrity. TolB occupies a key intermediary position in the Tol-Pal system because it communicates directly with both membrane-embedded components, Pal in the outer membrane and TolA in the inner membrane. The sequence is that of Tol-Pal system protein TolB from Shigella boydii serotype 18 (strain CDC 3083-94 / BS512).